A 130-amino-acid polypeptide reads, in one-letter code: Small ribosomal subunit protein uS8 (130 aa).

The protein belongs to the universal ribosomal protein uS8 family. In terms of assembly, part of the 30S ribosomal subunit. Contacts proteins S5 and S12.

Functionally, one of the primary rRNA binding proteins, it binds directly to 16S rRNA central domain where it helps coordinate assembly of the platform of the 30S subunit. This is Small ribosomal subunit protein uS8 from Alteromonas mediterranea (strain DSM 17117 / CIP 110805 / LMG 28347 / Deep ecotype).